Consider the following 417-residue polypeptide: Equilibrative nucleotide transporter 2 (417 aa).

11 helical membrane-spanning segments follow: residues 20–40, 52–72, 85–105, 109–129, 144–164, 185–205, 265–285, 292–312, 328–348, 354–374, and 393–413; these read AVCWLLGVGCLLAWNSMLTIV, PSRILTIIYQSFSIGALSVLV, LFGYSLFSLGSLAVLVLNLAT, GGIGSFIGVCVISAAFGLADA, PEFLQSFLAGLAASGALTSGL, LFFAMSASFELVCVLLYAYVF, LAVTLFLVYLLTFSIFPGFLS, SLGDWYALVLIAVFNVSDLVG, CLLITSLGRLLLIPAFNITGI, WMIFLMSVLGLSNGYLTVCVI, and LVLYICGGMFAGVACDWLWLV.

This sequence belongs to the SLC29A/ENT transporter (TC 2.A.57) family. Expressed in leaves and flowers.

It localises to the cell membrane. Its function is as follows. May be involved in nucleoside transport. This chain is Equilibrative nucleotide transporter 2 (ENT2), found in Arabidopsis thaliana (Mouse-ear cress).